A 215-amino-acid chain; its full sequence is 3-isopropylmalate dehydratase small subunit (215 aa).

Belongs to the LeuD family. LeuD type 1 subfamily. As to quaternary structure, heterodimer of LeuC and LeuD.

It catalyses the reaction (2R,3S)-3-isopropylmalate = (2S)-2-isopropylmalate. The protein operates within amino-acid biosynthesis; L-leucine biosynthesis; L-leucine from 3-methyl-2-oxobutanoate: step 2/4. Catalyzes the isomerization between 2-isopropylmalate and 3-isopropylmalate, via the formation of 2-isopropylmaleate. The protein is 3-isopropylmalate dehydratase small subunit of Xanthomonas campestris pv. campestris (strain 8004).